Consider the following 536-residue polypeptide: Trigger factor (536 aa).

The PPIase FKBP-type domain maps to 164–249; that stretch reads GDQVIIDFAG…VKEVKVPAAT (86 aa). Residues 439–536 form a disordered region; sequence IEADDDSGHV…APAKKAAAKK (98 aa). Residues 472 to 502 show a composition bias toward basic and acidic residues; that stretch reads TKKEAVKDEAKAEEAPAKKAPAKKAEPKAEA. Over residues 503–515 the composition is skewed to low complexity; sequence KPAAAKKAAPAKA. Basic and acidic residues predominate over residues 516–525; that stretch reads AAEEKAEPAK. Basic residues predominate over residues 527 to 536; the sequence is APAKKAAAKK.

This sequence belongs to the FKBP-type PPIase family. Tig subfamily.

The protein localises to the cytoplasm. It catalyses the reaction [protein]-peptidylproline (omega=180) = [protein]-peptidylproline (omega=0). In terms of biological role, involved in protein export. Acts as a chaperone by maintaining the newly synthesized protein in an open conformation. Functions as a peptidyl-prolyl cis-trans isomerase. The sequence is that of Trigger factor from Sphingopyxis alaskensis (strain DSM 13593 / LMG 18877 / RB2256) (Sphingomonas alaskensis).